The chain runs to 301 residues: Small ribosomal subunit protein uS2 (301 aa).

The protein belongs to the universal ribosomal protein uS2 family.

This is Small ribosomal subunit protein uS2 from Acidobacterium capsulatum (strain ATCC 51196 / DSM 11244 / BCRC 80197 / JCM 7670 / NBRC 15755 / NCIMB 13165 / 161).